Consider the following 337-residue polypeptide: Glyceraldehyde-3-phosphate dehydrogenase (337 aa).

NAD(+) is bound by residues 11–12 (TI) and G111. 140–142 (SCN) provides a ligand contact to D-glyceraldehyde 3-phosphate. C141 serves as the catalytic Nucleophile. R169 lines the NAD(+) pocket. Residues 177-196 (KKGPINSIVPTTEVPSHHGP) form a disordered region. 194–195 (HG) provides a ligand contact to D-glyceraldehyde 3-phosphate. An NAD(+)-binding site is contributed by Q301.

This sequence belongs to the glyceraldehyde-3-phosphate dehydrogenase family. As to quaternary structure, homotetramer.

It is found in the cytoplasm. The catalysed reaction is D-glyceraldehyde 3-phosphate + phosphate + NADP(+) = (2R)-3-phospho-glyceroyl phosphate + NADPH + H(+). It carries out the reaction D-glyceraldehyde 3-phosphate + phosphate + NAD(+) = (2R)-3-phospho-glyceroyl phosphate + NADH + H(+). It participates in carbohydrate degradation; glycolysis; pyruvate from D-glyceraldehyde 3-phosphate: step 1/5. The sequence is that of Glyceraldehyde-3-phosphate dehydrogenase from Methanosphaera stadtmanae (strain ATCC 43021 / DSM 3091 / JCM 11832 / MCB-3).